Here is a 75-residue protein sequence, read N- to C-terminus: Psi-conotoxin PIIIE (75 aa).

The N-terminal stretch at 1 to 19 (MSKLGALLTICLLLFPITA) is a signal peptide. A propeptide spanning residues 20-50 (LLMDGDQPADRPAERMDYDISSEVHRLLERR) is cleaved from the precursor. A 4-hydroxyproline mark is found at Pro-52, Pro-53, and Pro-64. 3 disulfide bridges follow: Cys-54–Cys-66, Cys-55–Cys-71, and Cys-60–Cys-72. Glycine amide is present on Gly-74.

Expressed by the venom duct.

It is found in the secreted. Its function is as follows. Psi-conotoxins act on postsynaptic membranes, and act as non-competitive antagonist of nicotinic acetylcholine receptors (nAChR). Is more toxic than Psi-conotoxin PIIIF. In vivo, has paralytic activity when injected intraperitoneally into goldfish. In Conus purpurascens (Purple cone), this protein is Psi-conotoxin PIIIE.